Reading from the N-terminus, the 115-residue chain is Small ribosomal subunit protein uS14m (115 aa).

This sequence belongs to the universal ribosomal protein uS14 family. Component of the mitochondrial small ribosomal subunit (mt-SSU). Mature yeast 74S mitochondrial ribosomes consist of a small (37S) and a large (54S) subunit. The 37S small subunit contains a 15S ribosomal RNA (15S mt-rRNA) and 34 different proteins. The 54S large subunit contains a 21S rRNA (21S mt-rRNA) and 46 different proteins.

It localises to the mitochondrion. In terms of biological role, component of the mitochondrial ribosome (mitoribosome), a dedicated translation machinery responsible for the synthesis of mitochondrial genome-encoded proteins, including at least some of the essential transmembrane subunits of the mitochondrial respiratory chain. The mitoribosomes are attached to the mitochondrial inner membrane and translation products are cotranslationally integrated into the membrane. This is Small ribosomal subunit protein uS14m (MRP2) from Saccharomyces cerevisiae (strain ATCC 204508 / S288c) (Baker's yeast).